The chain runs to 475 residues: Ribulose bisphosphate carboxylase large chain (475 aa).

Positions 1-2 (MS) are excised as a propeptide. Residue P3 is modified to N-acetylproline. Residue K14 is modified to N6,N6,N6-trimethyllysine. Substrate-binding residues include N123 and T173. The Proton acceptor role is filled by K175. K177 lines the substrate pocket. 3 residues coordinate Mg(2+): K201, D203, and E204. An N6-carboxylysine modification is found at K201. H294 acts as the Proton acceptor in catalysis. Residues R295, H327, and S379 each coordinate substrate.

It belongs to the RuBisCO large chain family. Type I subfamily. In terms of assembly, heterohexadecamer of 8 large chains and 8 small chains; disulfide-linked. The disulfide link is formed within the large subunit homodimers. Requires Mg(2+) as cofactor. In terms of processing, the disulfide bond which can form in the large chain dimeric partners within the hexadecamer appears to be associated with oxidative stress and protein turnover.

Its subcellular location is the plastid. It is found in the chloroplast. The enzyme catalyses 2 (2R)-3-phosphoglycerate + 2 H(+) = D-ribulose 1,5-bisphosphate + CO2 + H2O. It carries out the reaction D-ribulose 1,5-bisphosphate + O2 = 2-phosphoglycolate + (2R)-3-phosphoglycerate + 2 H(+). Its function is as follows. RuBisCO catalyzes two reactions: the carboxylation of D-ribulose 1,5-bisphosphate, the primary event in carbon dioxide fixation, as well as the oxidative fragmentation of the pentose substrate in the photorespiration process. Both reactions occur simultaneously and in competition at the same active site. The sequence is that of Ribulose bisphosphate carboxylase large chain from Eucalyptus globulus subsp. globulus (Tasmanian blue gum).